The following is a 91-amino-acid chain: RNA-binding protein Hfq (91 aa).

One can recognise a Sm domain in the interval Asp-9–Val-68. Residues Ser-69 to Glu-91 are disordered.

Belongs to the Hfq family. In terms of assembly, homohexamer.

In terms of biological role, RNA chaperone that binds small regulatory RNA (sRNAs) and mRNAs to facilitate mRNA translational regulation in response to envelope stress, environmental stress and changes in metabolite concentrations. Also binds with high specificity to tRNAs. This is RNA-binding protein Hfq from Haemophilus influenzae (strain ATCC 51907 / DSM 11121 / KW20 / Rd).